The chain runs to 831 residues: Leucine--tRNA ligase (831 aa).

The short motif at 35–45 is the 'HIGH' region element; it reads PYPSGKIHVGH. Positions 600 to 604 match the 'KMSKS' region motif; that stretch reads KMSKS. Lysine 603 contacts ATP.

This sequence belongs to the class-I aminoacyl-tRNA synthetase family.

Its subcellular location is the cytoplasm. It carries out the reaction tRNA(Leu) + L-leucine + ATP = L-leucyl-tRNA(Leu) + AMP + diphosphate. This Rickettsia bellii (strain RML369-C) protein is Leucine--tRNA ligase.